The following is a 356-amino-acid chain: 4-hydroxy-2-oxovalerate aldolase (356 aa).

The Pyruvate carboxyltransferase domain occupies 7 to 257 (PRVTDTTLRD…NPGLDVFKLM (251 aa)). Residue 15–16 (RD) participates in substrate binding. Position 16 (Asp-16) interacts with Mn(2+). The Proton acceptor role is filled by His-19. The substrate site is built by Ser-169 and His-196. Positions 196 and 198 each coordinate Mn(2+). Position 287 (Tyr-287) interacts with substrate.

Belongs to the 4-hydroxy-2-oxovalerate aldolase family.

It carries out the reaction (S)-4-hydroxy-2-oxopentanoate = acetaldehyde + pyruvate. The polypeptide is 4-hydroxy-2-oxovalerate aldolase (Thermomicrobium roseum (strain ATCC 27502 / DSM 5159 / P-2)).